The sequence spans 417 residues: Conserved oligomeric Golgi complex subunit 1 (417 aa).

An N-acetylmethionine modification is found at Met1. Ser305 is modified (phosphoserine).

This sequence belongs to the COG1 family. Component of the conserved oligomeric Golgi (COG or Sec34/Sec35) complex which consists of eight different proteins COG1-COG8.

The protein resides in the golgi apparatus membrane. Its function is as follows. Acts as essential component of the peripheral membrane COG complex that is involved in intra-Golgi protein trafficking. COG is located at the cis-Golgi, and regulates tethering of retrograde intra-Golgi vesicles and possibly a number of other membrane trafficking events. This chain is Conserved oligomeric Golgi complex subunit 1 (COG1), found in Saccharomyces cerevisiae (strain ATCC 204508 / S288c) (Baker's yeast).